Here is a 354-residue protein sequence, read N- to C-terminus: MRVTDFAFELPESLIAHYPMPERSSCRLLSLDGPTGALTHGTFTDILDKLNPGDLLVFNNTRVIPARLFGRKASGGKIEVLVERMLDDKRILAHIRASKAPKPGAELLLGDDESIKATMLARHGALFEVEFNDERPVLEILNGIGHMPLPPYIDRPDEDADRELYQTVYGTRPGAVAAPTAGLHFDEPLLDKLRAKGVEMAFVTLHVGAGTFQPVRVDSIEEHTMHSEYAEVPQEVVDAVLAAKARGNRVIAVGTTSVRSLESAAQAAKDALIAPFFDDTQIFIYPGYQYQVIDALVTNFHLPESTLIMLVSAFAGYQHTMNAYKVAVEQKYRFFSYGDAMFITYNPQAISERP.

This sequence belongs to the QueA family. In terms of assembly, monomer.

Its subcellular location is the cytoplasm. The enzyme catalyses 7-aminomethyl-7-carbaguanosine(34) in tRNA + S-adenosyl-L-methionine = epoxyqueuosine(34) in tRNA + adenine + L-methionine + 2 H(+). It participates in tRNA modification; tRNA-queuosine biosynthesis. Functionally, transfers and isomerizes the ribose moiety from AdoMet to the 7-aminomethyl group of 7-deazaguanine (preQ1-tRNA) to give epoxyqueuosine (oQ-tRNA). In Klebsiella pneumoniae (strain 342), this protein is S-adenosylmethionine:tRNA ribosyltransferase-isomerase.